A 599-amino-acid chain; its full sequence is Elongation factor 4 (599 aa).

The 183-residue stretch at 5 to 187 (SHIRNFSIIA…RLVTTIPAPT (183 aa)) folds into the tr-type G domain. Residues 17–22 (DHGKST) and 134–137 (NKID) contribute to the GTP site.

It belongs to the TRAFAC class translation factor GTPase superfamily. Classic translation factor GTPase family. LepA subfamily.

It localises to the cell inner membrane. It catalyses the reaction GTP + H2O = GDP + phosphate + H(+). Functionally, required for accurate and efficient protein synthesis under certain stress conditions. May act as a fidelity factor of the translation reaction, by catalyzing a one-codon backward translocation of tRNAs on improperly translocated ribosomes. Back-translocation proceeds from a post-translocation (POST) complex to a pre-translocation (PRE) complex, thus giving elongation factor G a second chance to translocate the tRNAs correctly. Binds to ribosomes in a GTP-dependent manner. In Pseudomonas fluorescens (strain ATCC BAA-477 / NRRL B-23932 / Pf-5), this protein is Elongation factor 4.